Here is an 867-residue protein sequence, read N- to C-terminus: Bifunctional diterpene synthase, chloroplastic (867 aa).

The N-terminal 55 residues, 1–55, are a transit peptide targeting the chloroplast; sequence MAKVLFSSFQQTGISGSLKSGQLSGVFINGTNLKSNAHAKRFRKNSTSSITIRCC. Lys-255 lines the substrate pocket. Mg(2+) is bound by residues Asp-389 and Asp-391. Residues 389–392 carry the DXDD motif motif; sequence DIDD. Lys-474 lines the substrate pocket. Residues Asp-611, Asp-615, Asn-758, Thr-762, and Glu-766 each coordinate Mg(2+). A DDXXD motif motif is present at residues 611-615; sequence DDLMD.

Belongs to the terpene synthase family. Mg(2+) is required as a cofactor.

It is found in the plastid. It localises to the chloroplast. It carries out the reaction (+)-copalyl diphosphate = miltiradiene + diphosphate. It catalyses the reaction (2E,6E,10E)-geranylgeranyl diphosphate = (+)-copalyl diphosphate. The protein operates within secondary metabolite biosynthesis; terpenoid biosynthesis. Its function is as follows. Bifunctional diterpene cyclase that catalyzes the successive two-step type-B (protonation-initiated cyclization) and type-A (ionization-initiated cyclization) reactions of geranylgeranyl diphosphate (GGDP) producing successively (+)-copalyl diphosphate and miltiradiene. This chain is Bifunctional diterpene synthase, chloroplastic (MDS), found in Selaginella moellendorffii (Spikemoss).